The chain runs to 100 residues: uncharacterized protein (100 aa).

The segment at 78–100 (KPYRTESGTSSSNRMMLPPRQHV) is disordered.

This is an uncharacterized protein from Caenorhabditis elegans.